We begin with the raw amino-acid sequence, 272 residues long: Protein UL24 homolog (272 aa).

Belongs to the herpesviridae UL24 family.

Its subcellular location is the virion. It localises to the host cytoplasm. It is found in the host nucleus. The protein resides in the host nucleolus. The protein localises to the host Golgi apparatus. Its function is as follows. May participate in nuclear egress of viral particles. Plays a role in the dispersal of several host nucleolar proteins including NCL/nucleolin and NPM1. Since deletion of host NCL/nucleolin negatively impact on nuclear egress, UL24 supposedly acts on this process through its effect on host nucleoli. The sequence is that of Protein UL24 homolog from Equine herpesvirus 1 (strain V592) (EHV-1).